A 1399-amino-acid polypeptide reads, in one-letter code: DNA-directed RNA polymerase subunit beta' (1399 aa).

4 residues coordinate Zn(2+): Cys-71, Cys-73, Cys-86, and Cys-89. Residues Asp-462, Asp-464, and Asp-466 each contribute to the Mg(2+) site. Residues Cys-810, Cys-884, Cys-891, and Cys-894 each contribute to the Zn(2+) site. Positions 1379-1399 (KQAAIVPSQPEPQPLALPPAE) are disordered. Pro residues predominate over residues 1387–1399 (QPEPQPLALPPAE).

The protein belongs to the RNA polymerase beta' chain family. As to quaternary structure, the RNAP catalytic core consists of 2 alpha, 1 beta, 1 beta' and 1 omega subunit. When a sigma factor is associated with the core the holoenzyme is formed, which can initiate transcription. Mg(2+) serves as cofactor. Zn(2+) is required as a cofactor.

It catalyses the reaction RNA(n) + a ribonucleoside 5'-triphosphate = RNA(n+1) + diphosphate. DNA-dependent RNA polymerase catalyzes the transcription of DNA into RNA using the four ribonucleoside triphosphates as substrates. This is DNA-directed RNA polymerase subunit beta' from Bradyrhizobium sp. (strain BTAi1 / ATCC BAA-1182).